We begin with the raw amino-acid sequence, 1142 residues long: Auxin response factor 5 (1142 aa).

The segment at residues 148 to 250 is a DNA-binding region (TF-B3); the sequence is FCKTLTASDT…QLLLGIRRAN (103 aa). Residues 1009 to 1093 form the PB1 domain; that stretch reads RTFTKVYKRG…RCIRILSPQE (85 aa). The segment at 1114–1142 is disordered; sequence SSSDGVNGWRPRCDQNPGNPSIGPYDQFE.

Belongs to the ARF family. As to quaternary structure, homodimers and heterodimers. In terms of tissue distribution, expressed in roots, culms, leaves and young panicles.

It is found in the nucleus. In terms of biological role, auxin response factors (ARFs) are transcriptional factors that bind specifically to the DNA sequence 5'-TGTCTC-3' found in the auxin-responsive promoter elements (AuxREs). This is Auxin response factor 5 (ARF5) from Oryza sativa subsp. japonica (Rice).